Here is a 299-residue protein sequence, read N- to C-terminus: Oxygen-dependent coproporphyrinogen-III oxidase (299 aa).

Ser92 contributes to the substrate binding site. Residues His96 and His106 each coordinate a divalent metal cation. The active-site Proton donor is the His106. 108–110 (NVR) lines the substrate pocket. His145 and His175 together coordinate a divalent metal cation. The interval 240–275 (YVEFNLVWDRGTLFGLQTGGRTESILMSMPPLVRWE) is important for dimerization. 258 to 260 (GGR) contributes to the substrate binding site.

The protein belongs to the aerobic coproporphyrinogen-III oxidase family. As to quaternary structure, homodimer. It depends on a divalent metal cation as a cofactor.

Its subcellular location is the cytoplasm. It catalyses the reaction coproporphyrinogen III + O2 + 2 H(+) = protoporphyrinogen IX + 2 CO2 + 2 H2O. Its pathway is porphyrin-containing compound metabolism; protoporphyrin-IX biosynthesis; protoporphyrinogen-IX from coproporphyrinogen-III (O2 route): step 1/1. Its function is as follows. Involved in the heme biosynthesis. Catalyzes the aerobic oxidative decarboxylation of propionate groups of rings A and B of coproporphyrinogen-III to yield the vinyl groups in protoporphyrinogen-IX. The polypeptide is Oxygen-dependent coproporphyrinogen-III oxidase (Salmonella dublin (strain CT_02021853)).